Reading from the N-terminus, the 247-residue chain is uncharacterized protein (247 aa).

This is an uncharacterized protein from Schizosaccharomyces pombe (strain 972 / ATCC 24843) (Fission yeast).